The following is a 378-amino-acid chain: AT-hook motif nuclear-localized protein 5 (378 aa).

Disordered stretches follow at residues 30–70, 88–160, and 302–378; these read QVAS…AEHR, VQPT…GRKQ, and NNNK…LTRG. Over residues 104–113 the composition is skewed to basic residues; sequence VKKKRGRPRK. The short motif at 105–113 is the Bipartite nuclear localization signal element; sequence KKKRGRPRK. DNA-binding regions (a.T hook) lie at residues 105–117 and 147–159; these read KKKRGRPRKYVPD and KRARGRPPGTGRK. A PPC domain is found at 171–314; it reads TSAGLAFAPH…KTIKQEIKPK (144 aa). Composition is skewed to polar residues over residues 316–327 and 335–345; these read EPTNSEMETTPG and STGQHTPQNFP.

In terms of assembly, interacts with AHL29.

It is found in the nucleus. Transcription factor that specifically binds AT-rich DNA sequences related to the nuclear matrix attachment regions (MARs). The chain is AT-hook motif nuclear-localized protein 5 from Arabidopsis thaliana (Mouse-ear cress).